The primary structure comprises 115 residues: Photosystem II reaction center Psb28 protein (115 aa).

This sequence belongs to the Psb28 family. In terms of assembly, part of the photosystem II complex.

It localises to the plastid. The protein resides in the chloroplast thylakoid membrane. The polypeptide is Photosystem II reaction center Psb28 protein (Phaeodactylum tricornutum (strain CCAP 1055/1)).